Reading from the N-terminus, the 1115-residue chain is DNA-directed RNA polymerase subunit beta (1115 aa).

Residues 1084–1115 are disordered; the sequence is HEAGEGEDDEYFEEDEEAVDDEPMTFDDDDME. A compositionally biased stretch (acidic residues) spans 1088–1115; it reads EGEDDEYFEEDEEAVDDEPMTFDDDDME.

Belongs to the RNA polymerase beta chain family. As to quaternary structure, the RNAP catalytic core consists of 2 alpha, 1 beta, 1 beta' and 1 omega subunit. When a sigma factor is associated with the core the holoenzyme is formed, which can initiate transcription.

It carries out the reaction RNA(n) + a ribonucleoside 5'-triphosphate = RNA(n+1) + diphosphate. In terms of biological role, DNA-dependent RNA polymerase catalyzes the transcription of DNA into RNA using the four ribonucleoside triphosphates as substrates. This Desulfitobacterium hafniense (strain DSM 10664 / DCB-2) protein is DNA-directed RNA polymerase subunit beta.